A 1050-amino-acid chain; its full sequence is DNA-directed RNA polymerase subunit beta (1050 aa).

The protein belongs to the RNA polymerase beta chain family. As to quaternary structure, in plastids the minimal PEP RNA polymerase catalytic core is composed of four subunits: alpha, beta, beta', and beta''. When a (nuclear-encoded) sigma factor is associated with the core the holoenzyme is formed, which can initiate transcription (Potential).

It is found in the plastid. Its subcellular location is the apicoplast. It catalyses the reaction RNA(n) + a ribonucleoside 5'-triphosphate = RNA(n+1) + diphosphate. DNA-dependent RNA polymerase catalyzes the transcription of DNA into RNA using the four ribonucleoside triphosphates as substrates. This Neospora caninum (Coccidian parasite) protein is DNA-directed RNA polymerase subunit beta (rpoB).